The sequence spans 168 residues: Phosphopantetheine adenylyltransferase (168 aa).

Ser-8 contributes to the substrate binding site. ATP contacts are provided by residues 8 to 9 and His-16; that span reads SF. 3 residues coordinate substrate: Lys-40, Ala-72, and Arg-86. ATP contacts are provided by residues 87–89, Glu-97, and 122–128; these read GLR and YSFLSSS.

This sequence belongs to the bacterial CoaD family. As to quaternary structure, homohexamer. It depends on Mg(2+) as a cofactor.

Its subcellular location is the cytoplasm. It carries out the reaction (R)-4'-phosphopantetheine + ATP + H(+) = 3'-dephospho-CoA + diphosphate. The protein operates within cofactor biosynthesis; coenzyme A biosynthesis; CoA from (R)-pantothenate: step 4/5. In terms of biological role, reversibly transfers an adenylyl group from ATP to 4'-phosphopantetheine, yielding dephospho-CoA (dPCoA) and pyrophosphate. In Trichodesmium erythraeum (strain IMS101), this protein is Phosphopantetheine adenylyltransferase.